A 142-amino-acid polypeptide reads, in one-letter code: UPF0102 protein Bcen2424_0290 (142 aa).

Residues 1–19 (MCHAAPARPEGARGRPPSG) show a composition bias toward low complexity. The disordered stretch occupies residues 1 to 27 (MCHAAPARPEGARGRPPSGDNFSGAAR).

This sequence belongs to the UPF0102 family.

The chain is UPF0102 protein Bcen2424_0290 from Burkholderia cenocepacia (strain HI2424).